A 501-amino-acid polypeptide reads, in one-letter code: Lysine--tRNA ligase (501 aa).

The Mg(2+) site is built by glutamate 411 and glutamate 418.

This sequence belongs to the class-II aminoacyl-tRNA synthetase family. In terms of assembly, homodimer. It depends on Mg(2+) as a cofactor.

The protein resides in the cytoplasm. It carries out the reaction tRNA(Lys) + L-lysine + ATP = L-lysyl-tRNA(Lys) + AMP + diphosphate. The chain is Lysine--tRNA ligase from Aliivibrio salmonicida (strain LFI1238) (Vibrio salmonicida (strain LFI1238)).